A 135-amino-acid chain; its full sequence is ATP synthase epsilon chain (135 aa).

Belongs to the ATPase epsilon chain family. F-type ATPases have 2 components, CF(1) - the catalytic core - and CF(0) - the membrane proton channel. CF(1) has five subunits: alpha(3), beta(3), gamma(1), delta(1), epsilon(1). CF(0) has three main subunits: a, b and c.

The protein localises to the cell inner membrane. In terms of biological role, produces ATP from ADP in the presence of a proton gradient across the membrane. In Nitrobacter winogradskyi (strain ATCC 25391 / DSM 10237 / CIP 104748 / NCIMB 11846 / Nb-255), this protein is ATP synthase epsilon chain.